The chain runs to 310 residues: Regulator of microtubule dynamics protein 1 (310 aa).

At Lys-165 the chain carries N6-succinyllysine. 2 TPR repeats span residues 168 to 204 and 222 to 258; these read AICI…NPKD and PWYQ…DPNF.

The protein belongs to the RMDN family. Interacts with microtubules.

The protein localises to the cytoplasm. The protein resides in the cytoskeleton. It is found in the spindle. Its subcellular location is the spindle pole. This is Regulator of microtubule dynamics protein 1 (Rmdn1) from Rattus norvegicus (Rat).